We begin with the raw amino-acid sequence, 155 residues long: UPF0178 protein ACICU_02858 (155 aa).

Residues 120 to 155 (GAGVQTGGPPPISERDKREFSSALDQTILKQKRKTA) are disordered.

It belongs to the UPF0178 family.

The protein is UPF0178 protein ACICU_02858 of Acinetobacter baumannii (strain ACICU).